The primary structure comprises 399 residues: Ectoine hydrolase (399 aa).

Belongs to the peptidase M24 family.

It localises to the cytoplasm. It carries out the reaction L-ectoine + H2O = (2S)-2-acetamido-4-aminobutanoate. Involved in the degradation of ectoine, which allows H.elongata to utilize ectoine as both a carbon and a nitrogen source for growth. Catalyzes the hydrolysis of ectoine to N-acetyl-L-2,4-diaminobutyric acid (N-Ac-DABA). It can produce both isoforms N-gamma-acetyl-L-2,4-diaminobutyric acid (N-gamma-Ac-DABA) and N-alpha-acetyl-L-2,4-diaminobutyric acid (-Nalpha-Ac-DABA), however N-alpha-Ac-DABA is the essential substrate for the subsequent catabolic enzyme DoeB. This Halomonas elongata (strain ATCC 33173 / DSM 2581 / NBRC 15536 / NCIMB 2198 / 1H9) protein is Ectoine hydrolase.